The primary structure comprises 165 residues: Endoribonuclease YbeY (165 aa).

Residues His130, His134, and His140 each coordinate Zn(2+).

This sequence belongs to the endoribonuclease YbeY family. It depends on Zn(2+) as a cofactor.

Its subcellular location is the cytoplasm. Single strand-specific metallo-endoribonuclease involved in late-stage 70S ribosome quality control and in maturation of the 3' terminus of the 16S rRNA. The polypeptide is Endoribonuclease YbeY (Streptococcus pneumoniae serotype 4 (strain ATCC BAA-334 / TIGR4)).